Reading from the N-terminus, the 331-residue chain is tRNA-cytidine(32) 2-sulfurtransferase (331 aa).

The segment at 1–33 (MNAPHMNDTAADAATLDDAAAPAGRPALTRREQ) is disordered. Residues 8-23 (DTAADAATLDDAAAPA) show a composition bias toward low complexity. Residues 71-76 (SGGKDS) carry the PP-loop motif motif. [4Fe-4S] cluster is bound by residues C146, C149, and C237.

The protein belongs to the TtcA family. Homodimer. Mg(2+) serves as cofactor. Requires [4Fe-4S] cluster as cofactor.

Its subcellular location is the cytoplasm. It carries out the reaction cytidine(32) in tRNA + S-sulfanyl-L-cysteinyl-[cysteine desulfurase] + AH2 + ATP = 2-thiocytidine(32) in tRNA + L-cysteinyl-[cysteine desulfurase] + A + AMP + diphosphate + H(+). Its pathway is tRNA modification. Functionally, catalyzes the ATP-dependent 2-thiolation of cytidine in position 32 of tRNA, to form 2-thiocytidine (s(2)C32). The sulfur atoms are provided by the cysteine/cysteine desulfurase (IscS) system. This chain is tRNA-cytidine(32) 2-sulfurtransferase, found in Burkholderia cenocepacia (strain HI2424).